The sequence spans 190 residues: dCTP deaminase (190 aa).

113–118 is a binding site for dCTP; that stretch reads KSTYAR. The Proton donor/acceptor role is filled by glutamate 139. DCTP is bound by residues glutamine 158, tyrosine 172, lysine 181, and glutamine 182.

This sequence belongs to the dCTP deaminase family. In terms of assembly, homotrimer.

It carries out the reaction dCTP + H2O + H(+) = dUTP + NH4(+). It functions in the pathway pyrimidine metabolism; dUMP biosynthesis; dUMP from dCTP (dUTP route): step 1/2. Its function is as follows. Catalyzes the deamination of dCTP to dUTP. This chain is dCTP deaminase, found in Chlamydia pneumoniae (Chlamydophila pneumoniae).